A 286-amino-acid chain; its full sequence is Phosphatidylserine decarboxylase proenzyme (286 aa).

Active-site charge relay system; for autoendoproteolytic cleavage activity residues include Asp89, His146, and Ser252. Ser252 serves as the catalytic Schiff-base intermediate with substrate; via pyruvic acid; for decarboxylase activity. Pyruvic acid (Ser); by autocatalysis is present on Ser252.

Belongs to the phosphatidylserine decarboxylase family. PSD-B subfamily. Prokaryotic type I sub-subfamily. As to quaternary structure, heterodimer of a large membrane-associated beta subunit and a small pyruvoyl-containing alpha subunit. Requires pyruvate as cofactor. In terms of processing, is synthesized initially as an inactive proenzyme. Formation of the active enzyme involves a self-maturation process in which the active site pyruvoyl group is generated from an internal serine residue via an autocatalytic post-translational modification. Two non-identical subunits are generated from the proenzyme in this reaction, and the pyruvate is formed at the N-terminus of the alpha chain, which is derived from the carboxyl end of the proenzyme. The autoendoproteolytic cleavage occurs by a canonical serine protease mechanism, in which the side chain hydroxyl group of the serine supplies its oxygen atom to form the C-terminus of the beta chain, while the remainder of the serine residue undergoes an oxidative deamination to produce ammonia and the pyruvoyl prosthetic group on the alpha chain. During this reaction, the Ser that is part of the protease active site of the proenzyme becomes the pyruvoyl prosthetic group, which constitutes an essential element of the active site of the mature decarboxylase.

The protein resides in the cell membrane. The enzyme catalyses a 1,2-diacyl-sn-glycero-3-phospho-L-serine + H(+) = a 1,2-diacyl-sn-glycero-3-phosphoethanolamine + CO2. It functions in the pathway phospholipid metabolism; phosphatidylethanolamine biosynthesis; phosphatidylethanolamine from CDP-diacylglycerol: step 2/2. Functionally, catalyzes the formation of phosphatidylethanolamine (PtdEtn) from phosphatidylserine (PtdSer). This chain is Phosphatidylserine decarboxylase proenzyme, found in Shewanella loihica (strain ATCC BAA-1088 / PV-4).